The following is a 199-amino-acid chain: Photosystem I reaction center subunit XI (199 aa).

The next 2 helical transmembrane spans lie at 108–128 (LTAGLLAAIGAVHILTALLVL) and 165–185 (FWLGGCGGSVFAWLLVGTLHL).

Belongs to the PsaL family.

It is found in the cellular thylakoid membrane. The sequence is that of Photosystem I reaction center subunit XI from Prochlorococcus marinus (strain AS9601).